A 376-amino-acid chain; its full sequence is Methionine import ATP-binding protein MetN 2 (376 aa).

The region spanning 34-273 is the ABC transporter domain; it reads VRFINLGKTY…PQHDVSKTLL (240 aa). Residue 70 to 77 participates in ATP binding; that stretch reads GRSGAGKS.

This sequence belongs to the ABC transporter superfamily. Methionine importer (TC 3.A.1.24) family. In terms of assembly, the complex is composed of two ATP-binding proteins (MetN), two transmembrane proteins (MetI) and a solute-binding protein (MetQ).

It localises to the cell inner membrane. It catalyses the reaction L-methionine(out) + ATP + H2O = L-methionine(in) + ADP + phosphate + H(+). The catalysed reaction is D-methionine(out) + ATP + H2O = D-methionine(in) + ADP + phosphate + H(+). Its function is as follows. Part of the ABC transporter complex MetNIQ involved in methionine import. Responsible for energy coupling to the transport system. This Pseudomonas savastanoi pv. phaseolicola (strain 1448A / Race 6) (Pseudomonas syringae pv. phaseolicola (strain 1448A / Race 6)) protein is Methionine import ATP-binding protein MetN 2.